We begin with the raw amino-acid sequence, 459 residues long: Serine protease HTRA3 (459 aa).

The signal sequence occupies residues 1-23 (MQARALLPATLAILATLAVLALA). In terms of domain architecture, IGFBP N-terminal spans 27–90 (PAAPCPARCD…ECVRGVCRCR (64 aa)). Intrachain disulfides connect Cys-31-Cys-54, Cys-35-Cys-56, Cys-40-Cys-57, Cys-45-Cys-60, Cys-68-Cys-82, Cys-76-Cys-87, Cys-89-Cys-107, and Cys-96-Cys-132. The Kazal-like domain occupies 76–134 (CGDSLECVRGVCRCRWTHTVCGTDGHTYADVCALQAASRRALQVSGTPVRQLQKGACPS). Residues 181–347 (GSGFIMSEAG…IPSDRITRFL (167 aa)) form a serine protease region. Catalysis depends on charge relay system residues His-197, Asp-233, and Ser-311. The 86-residue stretch at 365–450 (IRMRTITPSL…EVRRGNDDLL (86 aa)) folds into the PDZ domain.

The protein belongs to the peptidase S1C family. Homotrimer. Interacts with MYH9. Interacts with TGFB1; the interaction inhibits TGFB-mediated signaling. Interacts with BMP4; the interaction inhibits BMP4-mediated signaling. Interacts with TGFB2 and GDF5. In terms of tissue distribution, highest level of isoform 1 in maternal part of the placenta, moderate level in heart, testis and ovary, low level in muscle and lung. High expression found in granulosa cells of the ovary. Expressed in bone matrix, particularly in articular chondrocytes. Very low level of isoform 2 expressed in placenta. Expressed in the bone matrix, particularly in articular chondrocytes.

The protein resides in the secreted. Functionally, serine protease that cleaves beta-casein/CSN2 as well as several extracellular matrix (ECM) proteoglycans such as decorin/DCN, biglycan/BGN and fibronectin/FN1. Inhibits signaling mediated by TGF-beta family proteins possibly indirectly by degradation of these ECM proteoglycans. May act as a tumor suppressor. Negatively regulates, in vitro, trophoblast invasion during placental development and may be involved in the development of the placenta in vivo. May also have a role in ovarian development, granulosa cell differentiation and luteinization. The sequence is that of Serine protease HTRA3 (Htra3) from Mus musculus (Mouse).